Reading from the N-terminus, the 212-residue chain is Ferric nitrobindin-like protein (212 aa).

The span at 1 to 11 shows a compositional bias: basic and acidic residues; that stretch reads MTSSDQPERGS. A disordered region spans residues 1–36; sequence MTSSDQPERGSGDAAVQAAAERAEQTRGRNVPQFDD. A GXWXGXG motif is present at residues 64 to 70; sequence GVWRGDG.

Belongs to the nitrobindin family.

This chain is Ferric nitrobindin-like protein, found in Saccharopolyspora erythraea (strain ATCC 11635 / DSM 40517 / JCM 4748 / NBRC 13426 / NCIMB 8594 / NRRL 2338).